The primary structure comprises 340 residues: GTP 3',8-cyclase (340 aa).

The 220-residue stretch at 8–227 (KLGRPIRDLR…DMIESHFDIE (220 aa)) folds into the Radical SAM core domain. GTP is bound at residue arginine 17. [4Fe-4S] cluster is bound by residues cysteine 24 and cysteine 28. Tyrosine 30 serves as a coordination point for S-adenosyl-L-methionine. Residue cysteine 31 coordinates [4Fe-4S] cluster. Position 71 (arginine 71) interacts with GTP. Glycine 75 provides a ligand contact to S-adenosyl-L-methionine. Threonine 102 contacts GTP. S-adenosyl-L-methionine is bound at residue serine 126. Residue lysine 163 coordinates GTP. Methionine 197 is a binding site for S-adenosyl-L-methionine. The [4Fe-4S] cluster site is built by cysteine 261 and cysteine 264. Residue 266 to 268 (RAR) coordinates GTP. Position 278 (cysteine 278) interacts with [4Fe-4S] cluster.

This sequence belongs to the radical SAM superfamily. MoaA family. As to quaternary structure, monomer and homodimer. [4Fe-4S] cluster serves as cofactor.

It catalyses the reaction GTP + AH2 + S-adenosyl-L-methionine = (8S)-3',8-cyclo-7,8-dihydroguanosine 5'-triphosphate + 5'-deoxyadenosine + L-methionine + A + H(+). Its pathway is cofactor biosynthesis; molybdopterin biosynthesis. Catalyzes the cyclization of GTP to (8S)-3',8-cyclo-7,8-dihydroguanosine 5'-triphosphate. The chain is GTP 3',8-cyclase from Staphylococcus haemolyticus (strain JCSC1435).